Here is a 212-residue protein sequence, read N- to C-terminus: Probable plastid-lipid-associated protein 11, chloroplastic (212 aa).

The transit peptide at 1–25 (MALALSLSACSPPLRRTRRAGFRTS) directs the protein to the chloroplast.

It belongs to the PAP/fibrillin family.

Its subcellular location is the plastid. The protein resides in the chloroplast thylakoid. This is Probable plastid-lipid-associated protein 11, chloroplastic (PAP11) from Arabidopsis thaliana (Mouse-ear cress).